The primary structure comprises 238 residues: Ubiquinone biosynthesis O-methyltransferase (238 aa).

Residues arginine 40, glycine 59, aspartate 81, and methionine 126 each coordinate S-adenosyl-L-methionine.

It belongs to the methyltransferase superfamily. UbiG/COQ3 family.

It carries out the reaction a 3-demethylubiquinol + S-adenosyl-L-methionine = a ubiquinol + S-adenosyl-L-homocysteine + H(+). It catalyses the reaction a 3-(all-trans-polyprenyl)benzene-1,2-diol + S-adenosyl-L-methionine = a 2-methoxy-6-(all-trans-polyprenyl)phenol + S-adenosyl-L-homocysteine + H(+). It participates in cofactor biosynthesis; ubiquinone biosynthesis. Functionally, O-methyltransferase that catalyzes the 2 O-methylation steps in the ubiquinone biosynthetic pathway. The protein is Ubiquinone biosynthesis O-methyltransferase of Neisseria meningitidis serogroup C (strain 053442).